Consider the following 245-residue polypeptide: Aliphatic sulfonates import ATP-binding protein SsuB 1 (245 aa).

The ABC transporter domain maps to 9–227; sequence LDLVGIGHRY…HRGDAQLAAW (219 aa). Residue 41 to 48 coordinates ATP; the sequence is GPSGVGKS.

This sequence belongs to the ABC transporter superfamily. Aliphatic sulfonates importer (TC 3.A.1.17.2) family. The complex is composed of two ATP-binding proteins (SsuB), two transmembrane proteins (SsuC) and a solute-binding protein (SsuA).

The protein localises to the cell membrane. The catalysed reaction is ATP + H2O + aliphatic sulfonate-[sulfonate-binding protein]Side 1 = ADP + phosphate + aliphatic sulfonateSide 2 + [sulfonate-binding protein]Side 1.. Part of the ABC transporter complex SsuABC involved in aliphatic sulfonates import. Responsible for energy coupling to the transport system. The chain is Aliphatic sulfonates import ATP-binding protein SsuB 1 from Rhodococcus jostii (strain RHA1).